The sequence spans 400 residues: Delta(12) fatty acid desaturase (400 aa).

A helical membrane pass occupies residues 91–111 (LAWPAYWIMQGIVCTGIWVLA). Residues 112–116 (HECGH) carry the Histidine box-1 motif. Residues 148-152 (HSKHH) carry the Histidine box-2 motif. The next 3 membrane-spanning stretches (helical) occupy residues 199–219 (IVTL…YLIM), 245–265 (FFDI…LIYA), and 277–297 (YYII…FLQH). The Histidine box-3 motif lies at 339–343 (HVAHH).

This sequence belongs to the fatty acid desaturase type 1 family.

It is found in the membrane. It catalyses the reaction (9Z)-octadecenoyl-CoA + 2 Fe(II)-[cytochrome b5] + O2 + 2 H(+) = (9Z,12Z)-octadecadienoyl-CoA + 2 Fe(III)-[cytochrome b5] + 2 H2O. The catalysed reaction is (9Z)-hexadecenoyl-CoA + 2 Fe(II)-[cytochrome b5] + O2 + 2 H(+) = (9Z,12Z)-hexadecadienoyl-CoA + 2 Fe(III)-[cytochrome b5] + 2 H2O. It participates in lipid metabolism; polyunsaturated fatty acid biosynthesis. Catalyzes the desaturation of oleic acid (Delta(9)-18:1) to linoleic acid (Delta(9), Delta(12)-18:2). In Mortierella isabellina (Filamentous fungus), this protein is Delta(12) fatty acid desaturase.